A 433-amino-acid polypeptide reads, in one-letter code: Enolase (433 aa).

Q167 is a binding site for (2R)-2-phosphoglycerate. E209 functions as the Proton donor in the catalytic mechanism. D246, E291, and D318 together coordinate Mg(2+). (2R)-2-phosphoglycerate-binding residues include K343, R372, S373, and K394. K343 serves as the catalytic Proton acceptor.

It belongs to the enolase family. In terms of assembly, component of the RNA degradosome, a multiprotein complex involved in RNA processing and mRNA degradation. The cofactor is Mg(2+).

The protein localises to the cytoplasm. The protein resides in the secreted. Its subcellular location is the cell surface. The catalysed reaction is (2R)-2-phosphoglycerate = phosphoenolpyruvate + H2O. The protein operates within carbohydrate degradation; glycolysis; pyruvate from D-glyceraldehyde 3-phosphate: step 4/5. In terms of biological role, catalyzes the reversible conversion of 2-phosphoglycerate (2-PG) into phosphoenolpyruvate (PEP). It is essential for the degradation of carbohydrates via glycolysis. This Hamiltonella defensa subsp. Acyrthosiphon pisum (strain 5AT) protein is Enolase.